A 501-amino-acid polypeptide reads, in one-letter code: Acyl-CoA-binding domain-containing protein 5A (501 aa).

The region spanning 9–98 (YEQRFNAAVK…LKLILESMPV (90 aa)) is the ACB domain. Residues 20-29 (IQNLPPNGSF), 40-44 (YSYYK), lysine 66, and tyrosine 85 contribute to the an acyl-CoA site. Positions 173 to 405 (IDLEDREDDD…GERWGADGPM (233 aa)) are disordered. Over residues 176–195 (EDREDDDDEDEEGERDEVEE) the composition is skewed to acidic residues. Polar residues predominate over residues 219–235 (SNGSISQHKGLSNGTHG). Composition is skewed to basic and acidic residues over residues 236-254 (SKSDLNRQESEENTEHMNH), 266-283 (NSEKDKEEDVSSSHHVAS), and 328-366 (RSQDDELLGREEGVQHGGEDGRGSRGGAQRRELPVKRSD). The span at 376–389 (SRSPASGSGSAGPQ) shows a compositional bias: low complexity. The stretch at 406–437 (TENLNEQIICALARLQDDMQSVLQRLHTLEAL) forms a coiled coil. Residues 465-485 (WWPFDVSLGTVAFAVVWPFVV) traverse the membrane as a helical segment.

This sequence belongs to the ATG37 family.

The protein localises to the membrane. In terms of biological role, acyl-CoA binding protein which acts as the peroxisome receptor for pexophagy but is dispensable for aggrephagy and nonselective autophagy. Binds medium- and long-chain acyl-CoA esters. The chain is Acyl-CoA-binding domain-containing protein 5A (acbd5a) from Danio rerio (Zebrafish).